A 237-amino-acid polypeptide reads, in one-letter code: Lectin alpha chain (237 aa).

The Mn(2+) site is built by E8 and D10. Ca(2+) is bound by residues D10, Y12, N14, and D19. Position 12 (Y12) interacts with a carbohydrate. Residues D19 and H24 each coordinate Mn(2+). L99–Y100 serves as a coordination point for a carbohydrate. Ca(2+) is bound at residue D208. R228 provides a ligand contact to a carbohydrate.

The protein belongs to the leguminous lectin family. In terms of assembly, equilibrium between homodimer and homotetramer. Oligomerization is pH-dependent with homotetramers forming at pH 6.5 and above. In terms of processing, the beta and gamma chains are produced by partial proteolytic processing of the lectin alpha chain by an asparaginyl endopeptidase. Mixture of 60% alpha lectin and 40% of its beta and gamma proteolytic fragments. As to expression, seed.

It is found in the vacuole. It localises to the aleurone grain. Functionally, D-mannose/D-glucose-binding lectin. Has anti-inflammatory activity in rats. Induces histamine release in mast cells from hamster and rat. Induces lymphocyte proliferation and IFNG production. Shows toxicity against the aquatic snail B.glabrata at concentrations higher than 20 ug/ml. In Dioclea virgata, this protein is Lectin alpha chain.